The following is a 235-amino-acid chain: Adenosine 5'-phosphosulfate reductase (235 aa).

4 residues coordinate [4Fe-4S] cluster: C121, C122, C204, and C207. C230 acts as the Nucleophile; cysteine thiosulfonate intermediate in catalysis.

Belongs to the PAPS reductase family. CysH subfamily. Requires [4Fe-4S] cluster as cofactor.

Its subcellular location is the cytoplasm. It carries out the reaction [thioredoxin]-disulfide + sulfite + AMP + 2 H(+) = adenosine 5'-phosphosulfate + [thioredoxin]-dithiol. It participates in sulfur metabolism; hydrogen sulfide biosynthesis; sulfite from sulfate. Its function is as follows. Catalyzes the formation of sulfite from adenosine 5'-phosphosulfate (APS) using thioredoxin as an electron donor. The polypeptide is Adenosine 5'-phosphosulfate reductase (Geobacillus sp. (strain WCH70)).